The chain runs to 491 residues: Probable CtpA-like serine protease (491 aa).

Residues 1 to 22 (MSESKDTTEVNQEVNEKASSQS) are disordered. The span at 9 to 22 (EVNQEVNEKASSQS) shows a compositional bias: polar residues. A helical transmembrane segment spans residues 34 to 54 (FIIILIVTILVTAMIAVFATI). Positions 119–201 (TKSFNEDVSG…TKVTLTIERG (83 aa)) constitute a PDZ domain. Catalysis depends on charge relay system residues serine 324, aspartate 335, and lysine 349.

This sequence belongs to the peptidase S41A family.

The protein localises to the cell membrane. The sequence is that of Probable CtpA-like serine protease from Staphylococcus saprophyticus subsp. saprophyticus (strain ATCC 15305 / DSM 20229 / NCIMB 8711 / NCTC 7292 / S-41).